The following is a 345-amino-acid chain: Phosphoribosylformylglycinamidine cyclo-ligase (345 aa).

This sequence belongs to the AIR synthase family.

The protein localises to the cytoplasm. The catalysed reaction is 2-formamido-N(1)-(5-O-phospho-beta-D-ribosyl)acetamidine + ATP = 5-amino-1-(5-phospho-beta-D-ribosyl)imidazole + ADP + phosphate + H(+). The protein operates within purine metabolism; IMP biosynthesis via de novo pathway; 5-amino-1-(5-phospho-D-ribosyl)imidazole from N(2)-formyl-N(1)-(5-phospho-D-ribosyl)glycinamide: step 2/2. This is Phosphoribosylformylglycinamidine cyclo-ligase from Shewanella loihica (strain ATCC BAA-1088 / PV-4).